Here is a 418-residue protein sequence, read N- to C-terminus: NADH-quinone oxidoreductase subunit D (418 aa).

This sequence belongs to the complex I 49 kDa subunit family. In terms of assembly, NDH-1 is composed of 14 different subunits. Subunits NuoB, C, D, E, F, and G constitute the peripheral sector of the complex.

The protein resides in the cell inner membrane. The enzyme catalyses a quinone + NADH + 5 H(+)(in) = a quinol + NAD(+) + 4 H(+)(out). NDH-1 shuttles electrons from NADH, via FMN and iron-sulfur (Fe-S) centers, to quinones in the respiratory chain. The immediate electron acceptor for the enzyme in this species is believed to be ubiquinone. Couples the redox reaction to proton translocation (for every two electrons transferred, four hydrogen ions are translocated across the cytoplasmic membrane), and thus conserves the redox energy in a proton gradient. In Neisseria meningitidis serogroup B (strain ATCC BAA-335 / MC58), this protein is NADH-quinone oxidoreductase subunit D.